Here is a 507-residue protein sequence, read N- to C-terminus: MAEAHITLSPKVTHEQQTDIDSECEITEVDDENVNENKSQEMIQDIPARDREEIENITRTFVELQENYRLIEKIGEGTFSSVYKAEDLHYGRYINDWDIQSEVLKESSFGKEKIPVNEDSRKPKYVAIKKIYATSSPARIYNELEILYLLRGSSVIAPLITALRNEDQVLVVLPYYEHTDFRQYYSTFSYRDMSIYFRCLFQAMQQTQTLGIIHRDIKPSNFLFDVRTKHGVLVDFGLAERYDGRQQSHSCRCTNSNAAELAHDFSIAQETSLGYIKNDTRPSKRANRAGTRGFRAPEVLFKCSSQSPKVDIWSAGVILLSFLTKRFPMFNSKDDVDALMEIACIFGKSEMRQCAALHGCTFETNVSTLTEKRVNFRKLILWASCGSASIYKEKLRHKPSQEERLCLDFLEKCLELDCNKRISAEEALDHDFLYLDNLAYEKKDDDTAFDNSFGETSFEKDEDLTAKHLSHILDFKEQEETDEPTSLSKRKRSIDEILPNDALQDGA.

The residue at position 22 (Ser22) is a Phosphoserine. In terms of domain architecture, Protein kinase spans 68 to 433; that stretch reads YRLIEKIGEG…AEEALDHDFL (366 aa). ATP contacts are provided by residues 74 to 82 and Lys129; that span reads IGEGTFSSV. Residue Asp216 is the Proton acceptor of the active site. Thr291 carries the phosphothreonine modification. Residues 475–507 are disordered; the sequence is FKEQEETDEPTSLSKRKRSIDEILPNDALQDGA. Ser493 carries the phosphoserine modification.

Belongs to the protein kinase superfamily. Ser/Thr protein kinase family. CDC7 subfamily. Heterodimer with the regulatory subunit him1/dfp1. May form homooligomeric complexes. Interacts with mcm10. Autophosphorylated. Phosphorylated by cds1 in vitro.

It is found in the nucleus. It catalyses the reaction L-seryl-[protein] + ATP = O-phospho-L-seryl-[protein] + ADP + H(+). The catalysed reaction is L-threonyl-[protein] + ATP = O-phospho-L-threonyl-[protein] + ADP + H(+). With respect to regulation, phosphorylation of exogenous substrates activated by Dfp1. Required for G1/S transition. Plays a role in DNA replication checkpoint signaling through regulating rad3 and cds1. Involved in the maintenance of mitotic chromosome structures during S phase through regulating the function of rad21. Required for initiation of mitotic DNA replication through phosphorylating mcm2/cdc19. Required for genome integrity. This chain is Cell cycle serine/threonine-protein kinase hsk1 (hsk1), found in Schizosaccharomyces pombe (strain 972 / ATCC 24843) (Fission yeast).